The primary structure comprises 549 residues: Limonene dehydrogenase subunit B (549 aa).

This sequence belongs to the carotenoid/retinoid oxidoreductase family. In terms of assembly, heterodimer composed of CtmA and CtmB. Requires FAD as cofactor.

It localises to the cytoplasm. The enzyme catalyses (4S)-limonene + A + H2O = (4S)-perillyl alcohol + AH2. It catalyses the reaction (4R)-limonene + A + H2O = (4R)-perillyl alcohol + AH2. It functions in the pathway terpene metabolism; monoterpene degradation. With respect to regulation, the presence of molecular oxygen causes a 40% reduction in specific activity. Involved in the degradation of the cyclic monoterpene limonene. Catalyzes the oxidation of limonene at the primary methyl group, forming perillyl alcohol. Hydroxylates the R- and S-enantiomers to their respective enantiomeric form of perillyl alcohol at a similar rate. Native CtmAB oxidizes a wide range of monocyclic monoterpenes containing the allylic methyl group motif (1-methyl-cyclohex-1-ene). Can also catalyze the reverse reaction, the reduction of perillyl alcohol to limonene, but with lower efficiency. Cannot use molecular oxygen as an electron acceptor. The natural electron acceptor is likely a heterodimeric electron transfer flavoprotein (ETF). This chain is Limonene dehydrogenase subunit B, found in Castellaniella defragrans (strain DSM 12143 / CCUG 39792 / 65Phen) (Alcaligenes defragrans).